A 236-amino-acid polypeptide reads, in one-letter code: Leucyl/phenylalanyl-tRNA--protein transferase (236 aa).

This sequence belongs to the L/F-transferase family.

Its subcellular location is the cytoplasm. The catalysed reaction is N-terminal L-lysyl-[protein] + L-leucyl-tRNA(Leu) = N-terminal L-leucyl-L-lysyl-[protein] + tRNA(Leu) + H(+). The enzyme catalyses N-terminal L-arginyl-[protein] + L-leucyl-tRNA(Leu) = N-terminal L-leucyl-L-arginyl-[protein] + tRNA(Leu) + H(+). It carries out the reaction L-phenylalanyl-tRNA(Phe) + an N-terminal L-alpha-aminoacyl-[protein] = an N-terminal L-phenylalanyl-L-alpha-aminoacyl-[protein] + tRNA(Phe). Functions in the N-end rule pathway of protein degradation where it conjugates Leu, Phe and, less efficiently, Met from aminoacyl-tRNAs to the N-termini of proteins containing an N-terminal arginine or lysine. This chain is Leucyl/phenylalanyl-tRNA--protein transferase, found in Idiomarina loihiensis (strain ATCC BAA-735 / DSM 15497 / L2-TR).